A 321-amino-acid chain; its full sequence is uncharacterized protein (321 aa).

Residue V2 is modified to N-acetylvaline. The disordered stretch occupies residues S37–R63. Over residues L43–A52 the composition is skewed to polar residues. T44 is subject to Phosphothreonine. 7 positions are modified to phosphoserine: S49, S69, S121, S126, S129, S137, and S139. 2 disordered regions span residues K115 to S270 and E283 to Q321. 3 stretches are compositionally biased toward polar residues: residues K120–D145, K153–N162, and S178–R189. A Phosphothreonine modification is found at T159. Basic and acidic residues predominate over residues E204–S229. Positions L237–P253 are enriched in polar residues. Residues S238, S240, S242, and S270 each carry the phosphoserine modification. Residues T284–E305 are compositionally biased toward acidic residues. Residues E306–A315 show a composition bias toward basic and acidic residues.

It is found in the cytoplasm. This is an uncharacterized protein from Saccharomyces cerevisiae (strain ATCC 204508 / S288c) (Baker's yeast).